The following is a 331-amino-acid chain: 6-phosphogluconolactonase (331 aa).

An N6-acetyllysine modification is found at Lys287.

This sequence belongs to the cycloisomerase 2 family.

The enzyme catalyses 6-phospho-D-glucono-1,5-lactone + H2O = 6-phospho-D-gluconate + H(+). Its pathway is carbohydrate degradation; pentose phosphate pathway; D-ribulose 5-phosphate from D-glucose 6-phosphate (oxidative stage): step 2/3. Functionally, catalyzes the hydrolysis of 6-phosphogluconolactone to 6-phosphogluconate. The protein is 6-phosphogluconolactonase of Escherichia coli (strain SMS-3-5 / SECEC).